We begin with the raw amino-acid sequence, 40 residues long: Chitin-binding protein 4 (40 aa).

Post-translationally, N-glycosylated.

Chitin-binding protein. Has antifungal activity against C.krusei, C.albicans, C.tropicalis and C.parapsilosis. Has antinociceptive and anti-inflammatory activity in mice. The polypeptide is Chitin-binding protein 4 (Moringa oleifera (Horseradish tree)).